Reading from the N-terminus, the 672-residue chain is tRNA 5-methylaminomethyl-2-thiouridine biosynthesis bifunctional protein MnmC (672 aa).

Positions 1–241 are tRNA (mnm(5)s(2)U34)-methyltransferase; sequence MLKVTTAHIH…KRECLQGFKP (241 aa). Residues 271-672 form an FAD-dependent cmnm(5)s(2)U34 oxidoreductase region; sequence IGGGISSLFS…RKLLKGTPVK (402 aa).

In the N-terminal section; belongs to the methyltransferase superfamily. tRNA (mnm(5)s(2)U34)-methyltransferase family. It in the C-terminal section; belongs to the DAO family. Requires FAD as cofactor.

The protein resides in the cytoplasm. The enzyme catalyses 5-aminomethyl-2-thiouridine(34) in tRNA + S-adenosyl-L-methionine = 5-methylaminomethyl-2-thiouridine(34) in tRNA + S-adenosyl-L-homocysteine + H(+). In terms of biological role, catalyzes the last two steps in the biosynthesis of 5-methylaminomethyl-2-thiouridine (mnm(5)s(2)U) at the wobble position (U34) in tRNA. Catalyzes the FAD-dependent demodification of cmnm(5)s(2)U34 to nm(5)s(2)U34, followed by the transfer of a methyl group from S-adenosyl-L-methionine to nm(5)s(2)U34, to form mnm(5)s(2)U34. This Mannheimia succiniciproducens (strain KCTC 0769BP / MBEL55E) protein is tRNA 5-methylaminomethyl-2-thiouridine biosynthesis bifunctional protein MnmC.